We begin with the raw amino-acid sequence, 262 residues long: Phosphatidylglycerol--prolipoprotein diacylglyceryl transferase (262 aa).

A run of 4 helical transmembrane segments spans residues 9 to 29 (LGPL…ILAV), 41 to 61 (IIPD…ILGA), 80 to 100 (IFAI…GALV), and 109 to 129 (LINT…AQSL). R131 serves as a coordination point for a 1,2-diacyl-sn-glycero-3-phospho-(1'-sn-glycerol). The next 3 membrane-spanning stretches (helical) occupy residues 167 to 187 (QPTF…ILIF), 197 to 217 (GHIT…IEGM), and 226 to 246 (GFRV…MIVI).

It belongs to the Lgt family.

It localises to the cell membrane. It catalyses the reaction L-cysteinyl-[prolipoprotein] + a 1,2-diacyl-sn-glycero-3-phospho-(1'-sn-glycerol) = an S-1,2-diacyl-sn-glyceryl-L-cysteinyl-[prolipoprotein] + sn-glycerol 1-phosphate + H(+). It participates in protein modification; lipoprotein biosynthesis (diacylglyceryl transfer). In terms of biological role, catalyzes the transfer of the diacylglyceryl group from phosphatidylglycerol to the sulfhydryl group of the N-terminal cysteine of a prolipoprotein, the first step in the formation of mature lipoproteins. The protein is Phosphatidylglycerol--prolipoprotein diacylglyceryl transferase of Streptococcus pneumoniae serotype 4 (strain ATCC BAA-334 / TIGR4).